Reading from the N-terminus, the 132-residue chain is MSTHDPISDLITRIRNAQMRSKSKVTTPGSKMRASVLEVLKSEGYIRGYATMEHPSGRSEIEIELKYFDGEPVIREIERVSKPGRRVYTSVKNLPRVNNGLGISVLSTPKGIMADHSARDANVGGEVLFTVF.

It belongs to the universal ribosomal protein uS8 family. As to quaternary structure, part of the 30S ribosomal subunit. Contacts proteins S5 and S12.

In terms of biological role, one of the primary rRNA binding proteins, it binds directly to 16S rRNA central domain where it helps coordinate assembly of the platform of the 30S subunit. The polypeptide is Small ribosomal subunit protein uS8 (Bradyrhizobium sp. (strain ORS 278)).